A 231-amino-acid chain; its full sequence is Ribose-5-phosphate isomerase A (231 aa).

Residues 32-35 (TGST), 85-88 (DGAD), and 98-101 (KGGG) contribute to the substrate site. The active-site Proton acceptor is the Glu107. A substrate-binding site is contributed by Lys125.

The protein belongs to the ribose 5-phosphate isomerase family. In terms of assembly, homodimer.

The enzyme catalyses aldehydo-D-ribose 5-phosphate = D-ribulose 5-phosphate. It functions in the pathway carbohydrate degradation; pentose phosphate pathway; D-ribose 5-phosphate from D-ribulose 5-phosphate (non-oxidative stage): step 1/1. Functionally, catalyzes the reversible conversion of ribose-5-phosphate to ribulose 5-phosphate. The protein is Ribose-5-phosphate isomerase A of Paraburkholderia phymatum (strain DSM 17167 / CIP 108236 / LMG 21445 / STM815) (Burkholderia phymatum).